The sequence spans 169 residues: Shikimate kinase (169 aa).

13 to 18 lines the ATP pocket; sequence GAGKST. A Mg(2+)-binding site is contributed by S17. D35, R59, and G80 together coordinate substrate. An ATP-binding site is contributed by R117. Position 136 (R136) interacts with substrate. ATP is bound at residue R153.

This sequence belongs to the shikimate kinase family. As to quaternary structure, monomer. Requires Mg(2+) as cofactor.

It localises to the cytoplasm. The enzyme catalyses shikimate + ATP = 3-phosphoshikimate + ADP + H(+). It functions in the pathway metabolic intermediate biosynthesis; chorismate biosynthesis; chorismate from D-erythrose 4-phosphate and phosphoenolpyruvate: step 5/7. Its function is as follows. Catalyzes the specific phosphorylation of the 3-hydroxyl group of shikimic acid using ATP as a cosubstrate. The chain is Shikimate kinase from Corynebacterium glutamicum (strain ATCC 13032 / DSM 20300 / JCM 1318 / BCRC 11384 / CCUG 27702 / LMG 3730 / NBRC 12168 / NCIMB 10025 / NRRL B-2784 / 534).